The following is a 103-amino-acid chain: MYAVIKSGGKQYRVQEGQTLKLEKLEVATGETLELDQVLLVADDDDVKVGAPLVEGAKVTAEVVSHGRGEKVKIIKFRRRKHQMRRQGHRQWFTEVKITGISA.

It belongs to the bacterial ribosomal protein bL21 family. In terms of assembly, part of the 50S ribosomal subunit. Contacts protein L20.

In terms of biological role, this protein binds to 23S rRNA in the presence of protein L20. The protein is Large ribosomal subunit protein bL21 of Chromohalobacter salexigens (strain ATCC BAA-138 / DSM 3043 / CIP 106854 / NCIMB 13768 / 1H11).